A 764-amino-acid chain; its full sequence is Molybdenum cofactor sulfurase 1 (764 aa).

Position 228 is an N6-(pyridoxal phosphate)lysine (Lys228). The active site involves Cys394. Residues 607–762 (LRLLKQSDEE…LYCNSVVEGL (156 aa)) form the MOSC domain.

The protein belongs to the class-V pyridoxal-phosphate-dependent aminotransferase family. MOCOS subfamily. Pyridoxal 5'-phosphate serves as cofactor.

It carries out the reaction Mo-molybdopterin + L-cysteine + AH2 = thio-Mo-molybdopterin + L-alanine + A + H2O. In terms of biological role, sulfurates the molybdenum cofactor. Sulfation of molybdenum is essential for xanthine dehydrogenase (XDH) and aldehyde oxidase (ADO) enzymes in which molybdenum cofactor is liganded by 1 oxygen and 1 sulfur atom in active form. The protein is Molybdenum cofactor sulfurase 1 of Aedes aegypti (Yellowfever mosquito).